A 700-amino-acid chain; its full sequence is Elongation factor G (700 aa).

In terms of domain architecture, tr-type G spans 10-286 (KKVRNIGIMA…AVIDYLPSPL (277 aa)). GTP contacts are provided by residues 19 to 26 (AHIDAGKT), 83 to 87 (DTPGH), and 137 to 140 (NKMD).

It belongs to the TRAFAC class translation factor GTPase superfamily. Classic translation factor GTPase family. EF-G/EF-2 subfamily.

The protein localises to the cytoplasm. Catalyzes the GTP-dependent ribosomal translocation step during translation elongation. During this step, the ribosome changes from the pre-translocational (PRE) to the post-translocational (POST) state as the newly formed A-site-bound peptidyl-tRNA and P-site-bound deacylated tRNA move to the P and E sites, respectively. Catalyzes the coordinated movement of the two tRNA molecules, the mRNA and conformational changes in the ribosome. This Nocardia farcinica (strain IFM 10152) protein is Elongation factor G.